The chain runs to 689 residues: Glycine--tRNA ligase beta subunit (689 aa).

It belongs to the class-II aminoacyl-tRNA synthetase family. As to quaternary structure, tetramer of two alpha and two beta subunits.

The protein localises to the cytoplasm. It carries out the reaction tRNA(Gly) + glycine + ATP = glycyl-tRNA(Gly) + AMP + diphosphate. The protein is Glycine--tRNA ligase beta subunit (glyS) of Coxiella burnetii (strain RSA 493 / Nine Mile phase I).